The primary structure comprises 142 residues: Putative phosphatidylglycerol/phosphatidylinositol transfer protein 2 (142 aa).

Residues 1-20 (MKFYLYLSILLILLTSTSFG) form the signal peptide.

It belongs to the NPC2 family. In terms of assembly, monomer.

In terms of biological role, catalyzes the intermembrane transfer of phosphatidylglycerol and phosphatidylinositol. This chain is Putative phosphatidylglycerol/phosphatidylinositol transfer protein 2, found in Dictyostelium discoideum (Social amoeba).